Here is a 520-residue protein sequence, read N- to C-terminus: NADH-quinone oxidoreductase subunit N (520 aa).

14 consecutive transmembrane segments (helical) span residues 13–33 (ALLPEMLLSGGAMLLLLASVW), 55–75 (FGVILCLVVGLAVVIAWGDGA), 87–107 (GFRWAVDLVILLGTALALMLL), 115–135 (AAFGPEVPSLMLLASTGMMVL), 141–161 (LMFVFLGVELMSLAVYVLAGV), 176–196 (FLLGAISSGFLLYGMALLFGA), 219–239 (FMSGVALLLVGLAFKVAAAPF), 250–270 (APLPVTAFMSATVKTAAFAVF), 285–305 (WHMGLWWLAAVTMVVGNVFAL), 313–333 (MLAYSSIAHAGYLLVSIIVGD), 339–359 (ALIFYVVSYTLATMGAFGVLI), 383–403 (WLAIAMTVFLLAFMGMPVLGG), 425–445 (ILAVVLVIASAVSAAYYLAVV), and 468–488 (SLIATAAVALLVFGLYPTPIM). Residues 494–508 (ATTTTSPTSNPAAPR) are compositionally biased toward low complexity. The segment at 494–520 (ATTTTSPTSNPAAPRGEVRLQTASVPR) is disordered.

Belongs to the complex I subunit 2 family. As to quaternary structure, NDH-1 is composed of 14 different subunits. Subunits NuoA, H, J, K, L, M, N constitute the membrane sector of the complex.

Its subcellular location is the cell inner membrane. The catalysed reaction is a quinone + NADH + 5 H(+)(in) = a quinol + NAD(+) + 4 H(+)(out). Functionally, NDH-1 shuttles electrons from NADH, via FMN and iron-sulfur (Fe-S) centers, to quinones in the respiratory chain. The immediate electron acceptor for the enzyme in this species is believed to be ubiquinone. Couples the redox reaction to proton translocation (for every two electrons transferred, four hydrogen ions are translocated across the cytoplasmic membrane), and thus conserves the redox energy in a proton gradient. The protein is NADH-quinone oxidoreductase subunit N of Gemmatimonas aurantiaca (strain DSM 14586 / JCM 11422 / NBRC 100505 / T-27).